Reading from the N-terminus, the 459-residue chain is NADH oxidase (459 aa).

N10 provides a ligand contact to FAD. Residue H11 is the Proton acceptor of the active site. Residues A12, D34, Q35, C44, V81, A110, S113, K143, and Y172 each contribute to the FAD site. The Redox-active role is filled by C44. C44 carries the post-translational modification Cysteine sulfinic acid (-SO2H). NAD(+) contacts are provided by I173, D192, Y201, and G256. Residue D294 participates in FAD binding. A310 contacts NAD(+). L311, A312, and S313 together coordinate FAD. G341 lines the NAD(+) pocket. F439 contributes to the FAD binding site.

It belongs to the class-III pyridine nucleotide-disulfide oxidoreductase family. Requires FAD as cofactor.

It is found in the secreted. It localises to the cell wall. It carries out the reaction 2 NADH + O2 + 2 H(+) = 2 NAD(+) + 2 H2O. In terms of biological role, catalyzes the four-electron reduction of molecular oxygen to water. Plays a role in redox balance maintenance. May be involved in mediating bacterial adhesion to host cells. May be considered a potential virulence factor. This chain is NADH oxidase, found in Streptococcus pneumoniae (strain ATCC BAA-255 / R6).